The chain runs to 340 residues: DNA-directed RNA polymerase subunit alpha (340 aa).

An alpha N-terminal domain (alpha-NTD) region spans residues 1-236 (MSVIQKNWQE…DQLQLFINFE (236 aa)). The tract at residues 252–340 (FNKNLLRKVD…DLAKKLEEPY (89 aa)) is alpha C-terminal domain (alpha-CTD).

The protein belongs to the RNA polymerase alpha chain family. In terms of assembly, homodimer. The RNAP catalytic core consists of 2 alpha, 1 beta, 1 beta' and 1 omega subunit. When a sigma factor is associated with the core the holoenzyme is formed, which can initiate transcription.

The enzyme catalyses RNA(n) + a ribonucleoside 5'-triphosphate = RNA(n+1) + diphosphate. In terms of biological role, DNA-dependent RNA polymerase catalyzes the transcription of DNA into RNA using the four ribonucleoside triphosphates as substrates. The chain is DNA-directed RNA polymerase subunit alpha from Rhodospirillum rubrum (strain ATCC 11170 / ATH 1.1.1 / DSM 467 / LMG 4362 / NCIMB 8255 / S1).